The sequence spans 365 residues: Peptide chain release factor 2 (365 aa).

Position 251 is an N5-methylglutamine (Q251).

This sequence belongs to the prokaryotic/mitochondrial release factor family. Methylated by PrmC. Methylation increases the termination efficiency of RF2.

The protein localises to the cytoplasm. Its function is as follows. Peptide chain release factor 2 directs the termination of translation in response to the peptide chain termination codons UGA and UAA. In Campylobacter jejuni subsp. doylei (strain ATCC BAA-1458 / RM4099 / 269.97), this protein is Peptide chain release factor 2.